A 410-amino-acid chain; its full sequence is Single Ig IL-1-related receptor (410 aa).

The Extracellular portion of the chain corresponds to 1–118 (MPGVCDRAPD…TLQRAGPTSH (118 aa)). One can recognise an Ig-like C2-type domain in the interval 9–109 (PDFLSPSEDQ…IQNISFSSFT (101 aa)). N-linked (GlcNAc...) asparagine glycans are attached at residues Asn31, Asn73, Asn86, and Asn102. An intrachain disulfide couples Cys32 to Cys98. A helical; Signal-anchor for type III membrane protein transmembrane segment spans residues 119 to 139 (VAAVLASLLVLLALLLAALLY). At 140–410 (VKCRLNVLLW…FYCLVSKDDM (271 aa)) the chain is on the cytoplasmic side. The TIR domain occupies 163 to 307 (KLYDAYVSYS…DFWKEVQLAL (145 aa)). The tract at residues 340-390 (EGRALDSEVDPDPEGDLGVRGPVFGEPSAPPHTSGVSLGESRSSEVDVSDL) is disordered. Ser383 is subject to Phosphoserine.

This sequence belongs to the interleukin-1 receptor family. As to quaternary structure, interacts with IL1R1, IRAK1, TLR4, TLR5, TLR9 and TRAF6. Upon IL-1 stimulation found in a complex at least composed of IL1R1, SIGIRR, MYD88, IRAK1 and TRAF6. Upon stimulation with LPC found in a complex at least composed of TLR4, SIG1IR, MYD88, IRAK1 and TRAF6. Interacts with PALM3. In terms of tissue distribution, mainly expressed in epithelial tissues such as kidney, lung and gut.

The protein localises to the membrane. Acts as a negative regulator of the Toll-like and IL-1R receptor signaling pathways. Attenuates the recruitment of receptor-proximal signaling components to the TLR4 receptor, probably through an TIR-TIR domain interaction with TLR4. Through its extracellular domain interferes with the heterodimerization of Il1R1 and IL1RAP. This is Single Ig IL-1-related receptor (SIGIRR) from Homo sapiens (Human).